Reading from the N-terminus, the 64-residue chain is Beta-defensin 5 (64 aa).

An N-terminal signal peptide occupies residues 1–23 (MKIHYLLFAFLLVLLSPLAGVFS). 3 cysteine pairs are disulfide-bonded: cysteine 32–cysteine 60, cysteine 39–cysteine 53, and cysteine 43–cysteine 61.

The protein belongs to the beta-defensin family.

It localises to the secreted. Has antibacterial activity. The chain is Beta-defensin 5 (Defb5) from Mus musculus (Mouse).